A 398-amino-acid chain; its full sequence is 4-hydroxy-3-methylbut-2-enyl diphosphate reductase (398 aa).

Residue C66 coordinates [4Fe-4S] cluster. Position 96 (H96) interacts with (2E)-4-hydroxy-3-methylbut-2-enyl diphosphate. H96 is a dimethylallyl diphosphate binding site. H96 contacts isopentenyl diphosphate. C157 is a [4Fe-4S] cluster binding site. H185 contributes to the (2E)-4-hydroxy-3-methylbut-2-enyl diphosphate binding site. H185 is a binding site for dimethylallyl diphosphate. H185 is an isopentenyl diphosphate binding site. The active-site Proton donor is E187. T250 contributes to the (2E)-4-hydroxy-3-methylbut-2-enyl diphosphate binding site. C288 lines the [4Fe-4S] cluster pocket. The (2E)-4-hydroxy-3-methylbut-2-enyl diphosphate site is built by S317, S318, N319, and S380. Residues S317, S318, N319, and S380 each contribute to the dimethylallyl diphosphate site. Isopentenyl diphosphate is bound by residues S317, S318, N319, and S380.

Belongs to the IspH family. It depends on [4Fe-4S] cluster as a cofactor.

The catalysed reaction is isopentenyl diphosphate + 2 oxidized [2Fe-2S]-[ferredoxin] + H2O = (2E)-4-hydroxy-3-methylbut-2-enyl diphosphate + 2 reduced [2Fe-2S]-[ferredoxin] + 2 H(+). The enzyme catalyses dimethylallyl diphosphate + 2 oxidized [2Fe-2S]-[ferredoxin] + H2O = (2E)-4-hydroxy-3-methylbut-2-enyl diphosphate + 2 reduced [2Fe-2S]-[ferredoxin] + 2 H(+). Its pathway is isoprenoid biosynthesis; dimethylallyl diphosphate biosynthesis; dimethylallyl diphosphate from (2E)-4-hydroxy-3-methylbutenyl diphosphate: step 1/1. The protein operates within isoprenoid biosynthesis; isopentenyl diphosphate biosynthesis via DXP pathway; isopentenyl diphosphate from 1-deoxy-D-xylulose 5-phosphate: step 6/6. Functionally, catalyzes the conversion of 1-hydroxy-2-methyl-2-(E)-butenyl 4-diphosphate (HMBPP) into a mixture of isopentenyl diphosphate (IPP) and dimethylallyl diphosphate (DMAPP). Acts in the terminal step of the DOXP/MEP pathway for isoprenoid precursor biosynthesis. The chain is 4-hydroxy-3-methylbut-2-enyl diphosphate reductase from Prochlorococcus marinus (strain AS9601).